The following is a 375-amino-acid chain: Alcohol dehydrogenase 6 (375 aa).

The residue at position 23 (Ser23) is a Phosphoserine. Cys47, His69, Cys99, Cys102, Cys105, Cys113, and Cys175 together coordinate Zn(2+). NAD(+) is bound by residues Gly200–Gly205, Asp224, Lys229, Val293–Leu295, and Arg370.

Belongs to the zinc-containing alcohol dehydrogenase family. Class-V subfamily. Dimer. Zn(2+) serves as cofactor.

The protein localises to the cytoplasm. The enzyme catalyses a primary alcohol + NAD(+) = an aldehyde + NADH + H(+). It catalyses the reaction a secondary alcohol + NAD(+) = a ketone + NADH + H(+). Alcohol dehydrogenase. Catalyzes the NAD-dependent oxidation of primary alcohols to the corresponding aldehydes. Oxidizes secondary alcohols to the corresponding ketones. This chain is Alcohol dehydrogenase 6 (ADH6), found in Pongo abelii (Sumatran orangutan).